The chain runs to 594 residues: APOBEC1 complementation factor (594 aa).

3 RRM domains span residues C56 to D134, C136 to P218, and K231 to P303. The segment at H360 to R409 is required for nuclear localization. At T499 the chain carries Phosphothreonine.

As to quaternary structure, part of the apolipoprotein B mRNA editing complex with APOBEC1. Interacts with TNPO2; TNPO2 may be responsible for transport of A1CF into the nucleus. Interacts with SYNCRIP. Interacts with CELF2/CUGBP2. Interacts with RBM47. As to expression, widely expressed with highest levels in brain, liver, pancreas, colon and spleen.

Its subcellular location is the nucleus. The protein resides in the endoplasmic reticulum. It localises to the cytoplasm. Functionally, essential component of the apolipoprotein B mRNA editing enzyme complex which is responsible for the postranscriptional editing of a CAA codon for Gln to a UAA codon for stop in APOB mRNA. Binds to APOB mRNA and is probably responsible for docking the catalytic subunit, APOBEC1, to the mRNA to allow it to deaminate its target cytosine. The complex also protects the edited APOB mRNA from nonsense-mediated decay. This is APOBEC1 complementation factor (A1CF) from Homo sapiens (Human).